The primary structure comprises 755 residues: Zinc transporter ZIP6 (755 aa).

Positions 1–28 are cleaved as a signal peptide; it reads MARKLSVILILTFALSVTNPLHELKAAA. At 29–325 the chain is on the extracellular side; sequence FPQTTEKISP…PKTYSLQIAW (297 aa). N-linked (GlcNAc...) asparagine glycosylation is present at asparagine 67. Residues 95-128 are compositionally biased toward basic and acidic residues; the sequence is DHDHHSDHEHHSDHERHSDHEHHSEHEHHSDHDH. Disordered stretches follow at residues 95–186 and 202–246; these read DHDH…SASE and LETI…SVSE. The span at 129–144 shows a compositional bias: basic residues; it reads HSHHNHAASGKNKRKA. Basic and acidic residues-rich tracts occupy residues 145 to 159 and 167 to 179; these read LCPD…KDPR and HRPE…RNVK. Low complexity predominate over residues 219-234; sequence SSSTPPSVTSKSRVSR. N-linked (GlcNAc...) asparagine glycosylation is found at asparagine 241, asparagine 266, and asparagine 283. The chain crosses the membrane as a helical span at residues 326–346; it reads VGGFIAISIISFLSLLGVILV. Residues 347 to 355 lie on the Cytoplasmic side of the membrane; sequence PLMNRVFFK. Residues 356–376 form a helical membrane-spanning segment; that stretch reads FLLSFLVALAVGTLSGDAFLH. Residues 377–423 lie on the Extracellular side of the membrane; the sequence is LLPHSHASHHHSHSHEEPAMEMKRGPLFSHLSSQNIEESAYFDSTWK. Residues 424–444 form a helical membrane-spanning segment; that stretch reads GLTALGGLYFMFLVEHVLTLI. Over 445 to 657 the chain is Cytoplasmic; it reads KQFKDKKKKN…LKAGMTVKQA (213 aa). A coiled-coil region spans residues 464–480; that stretch reads VEIKKQLSKYESQLSTN. Serine 471 and serine 478 each carry phosphoserine. A helical membrane pass occupies residues 658-678; sequence VLYNALSAMLAYLGMATGIFI. The Extracellular portion of the chain corresponds to 679 to 686; it reads GHYAENVS. Asparagine 684 carries an N-linked (GlcNAc...) asparagine glycan. The helical transmembrane segment at 687–707 threads the bilayer; that stretch reads MWIFALTAGLFMYVALVDMVP. At 708-724 the chain is on the cytoplasmic side; that stretch reads EMLHNDASDHGCSRWGY. A helical membrane pass occupies residues 725–745; the sequence is FFLQNAGMLLGFGIMLLISIF. Over 746–755 the chain is Extracellular; sequence EHKIVFRINF.

This sequence belongs to the ZIP transporter (TC 2.A.5) family. As to quaternary structure, interacts with SLC39A10; which triggers cells to undergo EMT and mitosis. Found in a complex with SLC39A6, SLC39A10 and with the 'Ser-727' phosphorylated form of STAT3 throughout mitosis. Found in a complex with SLC39A6, SLC39A10 and with NCAM1; this complex controls NCAM1 phosphorylation and integration into focal adhesion complexes during epithelial-to-mesenchymal transition (EMT). Found in a complex with SLC39A6, SLC39A10 and with GSK3B that controls NCAM1 phosphorylation. In terms of processing, cleaved on the N-terminus before locating to the plasma membrane. N-glycosylated. Post-translationally, phosphorylated by ZAP70 in response to TCR stimulation leading to its activation. As to expression, highly expressed in the breast, prostate, placenta, kidney, pituitary and corpus callosum. Weakly expressed in heart and intestine. Also highly expressed in cells derived from an adenocarcinoma of the cervix and lung carcinoma.

The protein resides in the cell membrane. The protein localises to the cell projection. It localises to the lamellipodium membrane. It is found in the membrane raft. Its subcellular location is the apical cell membrane. The catalysed reaction is Zn(2+)(in) = Zn(2+)(out). Zinc-influx transporter which plays a role in zinc homeostasis and in the induction of epithelial-to-mesenchymal transition (EMT). When associated with SLC39A10, the heterodimer formed by SLC39A10 and SLC39A6 mediates cellular zinc uptake to trigger cells to undergo epithelial- to-mesenchymal transition (EMT). The SLC39A10-SLC39A6 heterodimer also controls NCAM1 phosphorylation and its integration into focal adhesion complexes during EMT. Zinc influx inactivates GSK3B, enabling unphosphorylated SNAI1 in the nucleus to down-regulate adherence genes such as CDH1, causing loss of cell adherence. In addition, the SLC39A10-SLC39A6 heterodimer plays an essentiel role in initiating mitosis by importing zinc into cells to initiate a pathway resulting in the onset of mitosis. Participates in the T-cell receptor signaling regulation by mediating cellular zinc uptake into activated lymphocytes. Regulates the zinc influx necessary for proper meiotic progression to metaphase II (MII) that allows the oocyte-to-egg transition. This chain is Zinc transporter ZIP6, found in Homo sapiens (Human).